A 208-amino-acid chain; its full sequence is Anthranilate synthase component 2 (208 aa).

The region spanning 3-208 (HVVLIDNHDS…SRCVEQLLAN (206 aa)) is the Glutamine amidotransferase type-1 domain. Residue 53 to 55 (GPG) coordinates L-glutamine. Cys80 functions as the Nucleophile; for GATase activity in the catalytic mechanism. L-glutamine is bound by residues Gln84 and 145–146 (SL). Catalysis depends on for GATase activity residues His185 and Glu187.

In terms of assembly, heterotetramer consisting of two non-identical subunits: a beta subunit (TrpG) and a large alpha subunit (TrpE).

It catalyses the reaction chorismate + L-glutamine = anthranilate + pyruvate + L-glutamate + H(+). It functions in the pathway amino-acid biosynthesis; L-tryptophan biosynthesis; L-tryptophan from chorismate: step 1/5. Part of a heterotetrameric complex that catalyzes the two-step biosynthesis of anthranilate, an intermediate in the biosynthesis of L-tryptophan. In the first step, the glutamine-binding beta subunit (TrpG) of anthranilate synthase (AS) provides the glutamine amidotransferase activity which generates ammonia as a substrate that, along with chorismate, is used in the second step, catalyzed by the large alpha subunit of AS (TrpE) to produce anthranilate. In the absence of TrpG, TrpE can synthesize anthranilate directly from chorismate and high concentrations of ammonia. The polypeptide is Anthranilate synthase component 2 (trpG) (Corynebacterium glutamicum (strain ATCC 13032 / DSM 20300 / JCM 1318 / BCRC 11384 / CCUG 27702 / LMG 3730 / NBRC 12168 / NCIMB 10025 / NRRL B-2784 / 534)).